Consider the following 545-residue polypeptide: Chaperonin GroEL (545 aa).

Residues 29 to 32 (TLGP), lysine 50, 86 to 90 (DGTTT), glycine 415, and aspartate 495 each bind ATP.

Belongs to the chaperonin (HSP60) family. Forms a cylinder of 14 subunits composed of two heptameric rings stacked back-to-back. Interacts with the co-chaperonin GroES.

Its subcellular location is the cytoplasm. The enzyme catalyses ATP + H2O + a folded polypeptide = ADP + phosphate + an unfolded polypeptide.. Its function is as follows. Together with its co-chaperonin GroES, plays an essential role in assisting protein folding. The GroEL-GroES system forms a nano-cage that allows encapsulation of the non-native substrate proteins and provides a physical environment optimized to promote and accelerate protein folding. This chain is Chaperonin GroEL, found in Bacteroides fragilis (strain ATCC 25285 / DSM 2151 / CCUG 4856 / JCM 11019 / LMG 10263 / NCTC 9343 / Onslow / VPI 2553 / EN-2).